The sequence spans 134 residues: Large ribosomal subunit protein uL16c (134 aa).

The segment covering 1–17 has biased composition (basic residues); that stretch reads MLSPKRTRFRKQHRGRM. Residues 1 to 21 are disordered; that stretch reads MLSPKRTRFRKQHRGRMKGIS.

It belongs to the universal ribosomal protein uL16 family. Part of the 50S ribosomal subunit.

The protein resides in the plastid. Its subcellular location is the chloroplast. The sequence is that of Large ribosomal subunit protein uL16c from Solanum bulbocastanum (Wild potato).